A 225-amino-acid chain; its full sequence is Ethylene-responsive transcription factor 3 (225 aa).

The span at 1–12 shows a compositional bias: low complexity; that stretch reads MRRGRAAAAPAP. Disordered regions lie at residues 1-29 and 82-193; these read MRRG…IRFR and NFPL…NIAS. The segment at residues 27–84 is a DNA-binding region (AP2/ERF); sequence RFRGVRKRPWGRFAAEIRDPWKKTRVWLGTFDSAEDAARAYDAAARALRGPKAKTNFP. Residues 118–134 are compositionally biased toward low complexity; sequence SQRPTSSSMSSTVESFS. Residues 176-185 are compositionally biased toward basic and acidic residues; sequence DHGDCEKEND. Residues 202–208 carry the EAR-like (transcriptional repression) motif; the sequence is FDLNLPP.

Belongs to the ethylene-response factor family. Class 2 subfamily.

Its subcellular location is the nucleus. Functionally, transcription factor that binds to the GCC-box pathogenesis-related promoter element. Involved in the regulation of gene expression by stress factors and by components of stress signal transduction pathways. Probably acts as a transcriptional repressor and may regulate other AtERFs. This chain is Ethylene-responsive transcription factor 3 (ERF3), found in Nicotiana tabacum (Common tobacco).